A 242-amino-acid chain; its full sequence is ATP synthase subunit a (242 aa).

7 helical membrane-spanning segments follow: residues 23-43, 62-82, 84-104, 113-133, 143-163, 176-196, and 201-221; these read ISFTNCALFMILASLVSAVLL, VELIYNFVVGAIESNAGVGGL, YIPFVLSIFLFVLACNIIGIL, HVSVTLALSVVVCASVTVLGF, IFLPEGTPLWLAPMMVFIKLF, LAANMIAGHTIIAVIAEFVLK, and LAPLPFAFIMVLIAFEIFVAI.

This sequence belongs to the ATPase A chain family. As to quaternary structure, F-type ATPases have 2 components, CF(1) - the catalytic core - and CF(0) - the membrane proton channel. CF(1) has five subunits: alpha(3), beta(3), gamma(1), delta(1), epsilon(1). CF(0) has three main subunits: a(1), b(2) and c(9-12). The alpha and beta chains form an alternating ring which encloses part of the gamma chain. CF(1) is attached to CF(0) by a central stalk formed by the gamma and epsilon chains, while a peripheral stalk is formed by the delta and b chains.

The protein resides in the cell inner membrane. Its function is as follows. Key component of the proton channel; it plays a direct role in the translocation of protons across the membrane. This is ATP synthase subunit a from Anaplasma phagocytophilum (strain HZ).